The sequence spans 111 residues: Large ribosomal subunit protein uL24 (111 aa).

It belongs to the universal ribosomal protein uL24 family. In terms of assembly, part of the 50S ribosomal subunit.

Functionally, one of two assembly initiator proteins, it binds directly to the 5'-end of the 23S rRNA, where it nucleates assembly of the 50S subunit. Its function is as follows. One of the proteins that surrounds the polypeptide exit tunnel on the outside of the subunit. The chain is Large ribosomal subunit protein uL24 from Bifidobacterium longum (strain DJO10A).